Consider the following 295-residue polypeptide: Nucleotide-binding protein Sare_3328 (295 aa).

19-26 (GVSGGGRS) lines the ATP pocket. Residue 70-73 (DVRS) coordinates GTP.

This sequence belongs to the RapZ-like family.

Functionally, displays ATPase and GTPase activities. The polypeptide is Nucleotide-binding protein Sare_3328 (Salinispora arenicola (strain CNS-205)).